Reading from the N-terminus, the 441-residue chain is ATP-dependent protease ATPase subunit HslU (441 aa).

ATP contacts are provided by residues Val18, 60-65 (GVGKTE), Asp254, Glu319, and Arg391.

The protein belongs to the ClpX chaperone family. HslU subfamily. A double ring-shaped homohexamer of HslV is capped on each side by a ring-shaped HslU homohexamer. The assembly of the HslU/HslV complex is dependent on binding of ATP.

It is found in the cytoplasm. ATPase subunit of a proteasome-like degradation complex; this subunit has chaperone activity. The binding of ATP and its subsequent hydrolysis by HslU are essential for unfolding of protein substrates subsequently hydrolyzed by HslV. HslU recognizes the N-terminal part of its protein substrates and unfolds these before they are guided to HslV for hydrolysis. This is ATP-dependent protease ATPase subunit HslU from Verminephrobacter eiseniae (strain EF01-2).